Reading from the N-terminus, the 439-residue chain is Proline--tRNA ligase (439 aa).

The protein belongs to the class-II aminoacyl-tRNA synthetase family. ProS type 2 subfamily. As to quaternary structure, homodimer.

Its subcellular location is the cytoplasm. The enzyme catalyses tRNA(Pro) + L-proline + ATP = L-prolyl-tRNA(Pro) + AMP + diphosphate. Functionally, catalyzes the attachment of proline to tRNA(Pro) in a two-step reaction: proline is first activated by ATP to form Pro-AMP and then transferred to the acceptor end of tRNA(Pro). This Beijerinckia indica subsp. indica (strain ATCC 9039 / DSM 1715 / NCIMB 8712) protein is Proline--tRNA ligase.